Here is a 158-residue protein sequence, read N- to C-terminus: Ribonuclease HI (158 aa).

Residues 3 to 144 (ELKLIHIFTD…CDQLARAAAE (142 aa)) form the RNase H type-1 domain. The Mg(2+) site is built by Asp12, Glu50, Asp72, and Asp136.

Belongs to the RNase H family. Monomer. Mg(2+) serves as cofactor.

The protein resides in the cytoplasm. It carries out the reaction Endonucleolytic cleavage to 5'-phosphomonoester.. Endonuclease that specifically degrades the RNA of RNA-DNA hybrids. This chain is Ribonuclease HI, found in Shewanella oneidensis (strain ATCC 700550 / JCM 31522 / CIP 106686 / LMG 19005 / NCIMB 14063 / MR-1).